A 355-amino-acid chain; its full sequence is Cobalt-precorrin-5B C(1)-methyltransferase (355 aa).

The protein belongs to the CbiD family.

The catalysed reaction is Co-precorrin-5B + S-adenosyl-L-methionine = Co-precorrin-6A + S-adenosyl-L-homocysteine. Its pathway is cofactor biosynthesis; adenosylcobalamin biosynthesis; cob(II)yrinate a,c-diamide from sirohydrochlorin (anaerobic route): step 6/10. Functionally, catalyzes the methylation of C-1 in cobalt-precorrin-5B to form cobalt-precorrin-6A. This chain is Cobalt-precorrin-5B C(1)-methyltransferase, found in Parasynechococcus marenigrum (strain WH8102).